A 282-amino-acid chain; its full sequence is Undecaprenyl-diphosphatase (282 aa).

A run of 7 helical transmembrane segments spans residues 40 to 60 (GAAF…MYFW), 85 to 105 (ARMG…GLLF), 115 to 135 (SLYW…LAEW), 153 to 173 (IGWK…IPGS), 193 to 213 (AARF…IFQL), 230 to 250 (LAAA…FLLS), and 258 to 278 (TIFI…LSTG).

It belongs to the UppP family.

It is found in the cell inner membrane. The enzyme catalyses di-trans,octa-cis-undecaprenyl diphosphate + H2O = di-trans,octa-cis-undecaprenyl phosphate + phosphate + H(+). Catalyzes the dephosphorylation of undecaprenyl diphosphate (UPP). Confers resistance to bacitracin. This Chlorobium phaeovibrioides (strain DSM 265 / 1930) (Prosthecochloris vibrioformis (strain DSM 265)) protein is Undecaprenyl-diphosphatase.